A 201-amino-acid polypeptide reads, in one-letter code: Large ribosomal subunit protein bL25 (201 aa).

This sequence belongs to the bacterial ribosomal protein bL25 family. CTC subfamily. As to quaternary structure, part of the 50S ribosomal subunit; part of the 5S rRNA/L5/L18/L25 subcomplex. Contacts the 5S rRNA. Binds to the 5S rRNA independently of L5 and L18.

Its function is as follows. This is one of the proteins that binds to the 5S RNA in the ribosome where it forms part of the central protuberance. This Burkholderia multivorans (strain ATCC 17616 / 249) protein is Large ribosomal subunit protein bL25.